A 104-amino-acid polypeptide reads, in one-letter code: Large ribosomal subunit protein bL21 (104 aa).

It belongs to the bacterial ribosomal protein bL21 family. Part of the 50S ribosomal subunit. Contacts protein L20.

Functionally, this protein binds to 23S rRNA in the presence of protein L20. The chain is Large ribosomal subunit protein bL21 from Clostridium botulinum (strain ATCC 19397 / Type A).